The primary structure comprises 339 residues: Protein H339R (339 aa).

This sequence belongs to the asfivirus H339R family. In terms of assembly, interacts with host NACA (alpha chain of nascent polypeptide-associated complex).

It is found in the host cytoplasm. It localises to the host nucleus. The chain is Protein H339R from African swine fever virus (isolate Tick/Malawi/Lil 20-1/1983) (ASFV).